A 420-amino-acid chain; its full sequence is Gamma-glutamyl phosphate reductase 2 (420 aa).

It belongs to the gamma-glutamyl phosphate reductase family.

It is found in the cytoplasm. It carries out the reaction L-glutamate 5-semialdehyde + phosphate + NADP(+) = L-glutamyl 5-phosphate + NADPH + H(+). It functions in the pathway amino-acid biosynthesis; L-proline biosynthesis; L-glutamate 5-semialdehyde from L-glutamate: step 2/2. Functionally, catalyzes the NADPH-dependent reduction of L-glutamate 5-phosphate into L-glutamate 5-semialdehyde and phosphate. The product spontaneously undergoes cyclization to form 1-pyrroline-5-carboxylate. The polypeptide is Gamma-glutamyl phosphate reductase 2 (Synechocystis sp. (strain ATCC 27184 / PCC 6803 / Kazusa)).